The sequence spans 164 residues: CASP-like protein 1C2 (164 aa).

The Cytoplasmic segment spans residues 1–8 (MAVELKKV). Residues 9-29 (FSTILRFLALAATVVAVIVMI) traverse the membrane as a helical segment. Residues 30-53 (RSHDSAIVLNLTFSAKYNNTPAFK) are Extracellular-facing. A glycan (N-linked (GlcNAc...) asparagine) is linked at Asn-39. A helical membrane pass occupies residues 54–74 (YFVIAEGIASVYTIIVIFLWS). At 75–80 (KGLLGR) the chain is on the cytoplasmic side. Residues 81-101 (LIVILDMVTTVLLTSSISAAL) traverse the membrane as a helical segment. Residues 102–129 (AIAQVGKKGNSHAGWLPVCGQVPKFCDQ) lie on the Extracellular side of the membrane. The helical transmembrane segment at 130–150 (AIIALVAGFVAAIVYFMLLLC) threads the bilayer. Topologically, residues 151-164 (SLHAVLTPIFAVKP) are cytoplasmic.

This sequence belongs to the Casparian strip membrane proteins (CASP) family. As to quaternary structure, homodimer and heterodimers.

It is found in the cell membrane. The sequence is that of CASP-like protein 1C2 from Ricinus communis (Castor bean).